The following is a 213-amino-acid chain: Immunoglobulin lambda-like polypeptide 1 (213 aa).

The N-terminal stretch at 1–37 (MRPGTGQGGLEAPGEPGPNLRQRWPLLLLGLAVVTHG) is a signal peptide. The tract at residues 97–108 (VFGSGTQLTVLS) is j region. The c region stretch occupies residues 109–213 (QPKATPSVTL…EKTVAPAECS (105 aa)). In terms of domain architecture, Ig-like C1-type spans 114 to 208 (PSVTLFPPSS…EGSTVEKTVA (95 aa)). A disulfide bridge links cysteine 135 with cysteine 194.

As to quaternary structure, associates non-covalently with VPREB1. Interacts with SYNV1/HRD1 (via N-terminus); this interaction leads to increased IGLL1 ubiquitination and degradation in pre-B cells, possibly through a lysosomal, not proteasomal, pathway. Expressed only in pre-B-cells and a special B-cell line (which is surface Ig negative).

It localises to the endoplasmic reticulum. Its subcellular location is the secreted. Its function is as follows. Critical for B-cell development. The chain is Immunoglobulin lambda-like polypeptide 1 (IGLL1) from Homo sapiens (Human).